Here is a 535-residue protein sequence, read N- to C-terminus: Growth factor receptor-bound protein 7 (535 aa).

Residues 1–90 form a disordered region; it reads MELDLSPTHL…PILGGSSGAR (90 aa). Residues 21 to 37 are compositionally biased toward pro residues; sequence PATPPETPPPPDNPPPG. The 87-residue stretch at 99–185 folds into the Ras-associating domain; the sequence is RLCVVKVYSE…SRFIFRKNFA (87 aa). Phosphotyrosine; by FAK1 is present on residues tyrosine 187 and tyrosine 341. Positions 228–341 constitute a PH domain; that stretch reads FPEIQGFLQL…WLAAFRLFKY (114 aa). At serine 364 the chain carries Phosphoserine. One can recognise an SH2 domain in the interval 434–530; that stretch reads WFHGRISREE…ILPCLLRHCC (97 aa).

It belongs to the GRB7/10/14 family. As to quaternary structure, homodimer. Interacts (via SH2 domain) with EGFR, ERBB2, ERBB3 (when phosphorylated), ERBB4 (when phosphorylated), EPHB1, INSR, FGFR1, PDGFRA (tyrosine phosphorylated) and PDGFRB (tyrosine phosphorylated). Interacts with SHC1. Interacts with RND1. Interacts (when tyrosine phosphorylated) with FHL2 and HAX1. Interacts (via SH2 domain) with RET and PTK2/FAK1. Interacts (when not phosphorylated) with ELAVL1. In stressed cells, but not in normal cells, part of a complex that contains at least GRB7, PTK2/FAK1, STAU1, ELAVL1 and TIA1. Interacts (via SH2 domain) with KIT (phosphorylated). Interacts (via SH2 domain) with TEK/TIE2 (tyrosine phosphorylated). In terms of processing, phosphorylated on serine and threonine residues in response to activation of receptor kinases. Phosphorylated on tyrosine residues by TEK/TIE2. Phosphorylated on tyrosine residues by PTK2/FAK1, and possibly also other kinases. Phosphorylation is enhanced by activation of receptor kinases. Tyrosine phosphorylation is essential for activation of down-stream protein kinases. Phosphorylated on tyrosine residues in response to NTN1 signaling. Phosphorylation promotes stress granule disassembly during recovery after cellular stress.

The protein resides in the cytoplasm. Its subcellular location is the cell projection. It is found in the cell junction. It localises to the focal adhesion. The protein localises to the cell membrane. The protein resides in the cytoplasmic granule. Adapter protein that interacts with the cytoplasmic domain of numerous receptor kinases and modulates down-stream signaling. Promotes activation of down-stream protein kinases, including STAT3, AKT1, MAPK1 and/or MAPK3. Promotes activation of HRAS. Plays a role in signal transduction in response to EGF. Plays a role in the regulation of cell proliferation and cell migration. Plays a role in the assembly and stability of RNA stress granules. Binds to the 5'UTR of target mRNA molecules and represses translation of target mRNA species, when not phosphorylated. Phosphorylation impairs RNA binding and promotes stress granule disassembly during recovery after cellular stress. In Mus musculus (Mouse), this protein is Growth factor receptor-bound protein 7 (Grb7).